We begin with the raw amino-acid sequence, 551 residues long: Calnexin (551 aa).

The N-terminal stretch at 1–23 is a signal peptide; it reads MRPQNVAGVAGTGALIMAAGALA. The Lumenal segment spans residues 24–477; sequence DQTVFHPTSL…QAIKQMPEVA (454 aa). Residues 293–315 are disordered; it reads EEEPETIPDPEAEKPEEWDDEED. A helical transmembrane segment spans residues 478–498; that stretch reads AGLAAAVFTLLGMLLALFGFI. The Cytoplasmic segment spans residues 499 to 551; sequence GSAPTKVKQTTVKTKAVAPVAPAGEEEKKALDQAGVEIPAEGSKKRVTRSTKE. Positions 526-551 are disordered; the sequence is KKALDQAGVEIPAEGSKKRVTRSTKE.

It belongs to the calreticulin family.

It localises to the endoplasmic reticulum membrane. Functionally, endoplasmic reticulum (ER) chaperone that functions to stabilize non-native glycoproteins and retain them in the ER until they are properly folded or targeted for ER associated degradation (ERAD). With co-chaperone DNJ1, coordinately maintains ER homeostasis and contributes to maintenance of cell wall architecture. This is Calnexin from Cryptococcus neoformans var. grubii serotype A (strain H99 / ATCC 208821 / CBS 10515 / FGSC 9487) (Filobasidiella neoformans var. grubii).